The sequence spans 63 residues: 2-hydroxymuconate tautomerase (63 aa).

The active-site Proton acceptor; via imino nitrogen is proline 2.

This sequence belongs to the 4-oxalocrotonate tautomerase family. As to quaternary structure, homohexamer.

The catalysed reaction is (2Z,4E)-2-hydroxyhexa-2,4-dienedioate = (3E)-2-oxohex-3-enedioate. Its pathway is xenobiotic degradation; toluene degradation. Its function is as follows. Catalyzes the ketonization of 2-hydroxymuconate stereoselectively to yield 2-oxo-3-hexenedioate. The chain is 2-hydroxymuconate tautomerase (dmpI) from Pseudomonas sp. (strain CF600).